A 366-amino-acid polypeptide reads, in one-letter code: Aminomethyltransferase (366 aa).

The protein belongs to the GcvT family. As to quaternary structure, the glycine cleavage system is composed of four proteins: P, T, L and H.

It carries out the reaction N(6)-[(R)-S(8)-aminomethyldihydrolipoyl]-L-lysyl-[protein] + (6S)-5,6,7,8-tetrahydrofolate = N(6)-[(R)-dihydrolipoyl]-L-lysyl-[protein] + (6R)-5,10-methylene-5,6,7,8-tetrahydrofolate + NH4(+). Functionally, the glycine cleavage system catalyzes the degradation of glycine. The chain is Aminomethyltransferase from Bordetella parapertussis (strain 12822 / ATCC BAA-587 / NCTC 13253).